A 430-amino-acid chain; its full sequence is Pre-B-cell leukemia transcription factor 1 (430 aa).

The interval 1–40 (MDEQPRLMHSHAGVGMAGHPGLSQHLQDGAGGTEGEGGRK) is disordered. A PBC domain is found at 38-232 (GRKQDIGDIL…VMILRSRFLD (195 aa)). Positions 45-124 (DILQQIMTIT…EGVAGPEKGG (80 aa)) are PBC-A. The tract at residues 127-232 (AAAAAAAAAS…VMILRSRFLD (106 aa)) is PBC-B. The segment at residues 233–295 (ARRKRRNFNK…NKRIRYKKNI (63 aa)) is a DNA-binding region (homeobox; TALE-type). Disordered stretches follow at residues 317–338 (SAHGSQANSPSTPNSAGSSSSF) and 395–430 (SPQGISANGGWQDATTPSSVTSPTEGPGSVHSDTSN). Positions 323–338 (ANSPSTPNSAGSSSSF) are enriched in low complexity. The span at 407-418 (DATTPSSVTSPT) shows a compositional bias: polar residues.

This sequence belongs to the TALE/PBX homeobox family. In terms of assembly, forms a heterodimer with MEIS1 which binds DNA. The PBX1-MEIS1 heterodimer binds a cAMP-responsive sequence in CYP17. It also binds a consensus region in the SOX3 promoter. PBX1 forms heterotrimers with MEIS1 and a number of HOX proteins including HOXA9, HOXD4, HOXD9 and HOXD10. Forms heterodimers with HOXA1, HOXA5, HOXB7 and HOXB8 which bind the 5'-TGATTGAT-3' consensus sequence. Also forms heterodimers with HOXA5, HOXB7, HOXB8, HOXC8 and HOXD4 which bind the 5'-ATCAATCAA-3' consensus sequence. Interacts with PBXIP1. Interacts with TLX1. Interacts with FOXC1. Interacts with MN1. As to quaternary structure, interacts with MEIS2 isoform 4, SP1, SP3 and KLF4. Part of a PDX1:PBX1b:MEIS2B complex; PBX1b recruits MEIS2B to the complex. In terms of tissue distribution, expressed in the kidney. Expressed in the endothelial cells of the glomeruli and interstitium (at protein level). Expressed in all tissues except in cells of the B and T lineage. Expressed strongly in kidney and brain.

It localises to the nucleus. Its function is as follows. Transcription factor which binds the DNA sequence 5'-TGATTGAT-3' as part of a heterodimer with HOX proteins such as HOXA1, HOXA5, HOXB7 and HOXB8. Binds to the DNA sequence 5'-TGATTGAC-3' in complex with a nuclear factor which is not a class I HOX protein. Has also been shown to bind the DNA sequence 5'-ATCAATCAA-3' cooperatively with HOXA5, HOXB7, HOXB8, HOXC8 and HOXD4. Acts as a transcriptional activator of PF4 in complex with MEIS1. Also activates transcription of SOX3 in complex with MEIS1 by binding to the 5'-TGATTGAC-3' consensus sequence. In natural killer cells, binds to the NFIL3 promoter and acts as a transcriptional activator of NFIL3, promoting natural killer cell development. Plays a role in the cAMP-dependent regulation of CYP17A1 gene expression via its cAMP-regulatory sequence (CRS1). Probably in complex with MEIS2, involved in transcriptional regulation by KLF4. Acts as a transcriptional activator of NKX2-5 and a transcriptional repressor of CDKN2B. Together with NKX2-5, required for spleen development through a mechanism that involves CDKN2B repression. As part of a PDX1:PBX1b:MEIS2B complex in pancreatic acinar cells, is involved in the transcriptional activation of the ELA1 enhancer; the complex binds to the enhancer B element and cooperates with the transcription factor 1 complex (PTF1) bound to the enhancer A element. In Homo sapiens (Human), this protein is Pre-B-cell leukemia transcription factor 1 (PBX1).